The primary structure comprises 446 residues: Exodeoxyribonuclease 7 large subunit (446 aa).

It belongs to the XseA family. As to quaternary structure, heterooligomer composed of large and small subunits.

It localises to the cytoplasm. The enzyme catalyses Exonucleolytic cleavage in either 5'- to 3'- or 3'- to 5'-direction to yield nucleoside 5'-phosphates.. Functionally, bidirectionally degrades single-stranded DNA into large acid-insoluble oligonucleotides, which are then degraded further into small acid-soluble oligonucleotides. The protein is Exodeoxyribonuclease 7 large subunit of Streptococcus thermophilus (strain CNRZ 1066).